Here is a 290-residue protein sequence, read N- to C-terminus: Phosphoribosylaminoimidazole-succinocarboxamide synthase (290 aa).

This sequence belongs to the SAICAR synthetase family.

It catalyses the reaction 5-amino-1-(5-phospho-D-ribosyl)imidazole-4-carboxylate + L-aspartate + ATP = (2S)-2-[5-amino-1-(5-phospho-beta-D-ribosyl)imidazole-4-carboxamido]succinate + ADP + phosphate + 2 H(+). It participates in purine metabolism; IMP biosynthesis via de novo pathway; 5-amino-1-(5-phospho-D-ribosyl)imidazole-4-carboxamide from 5-amino-1-(5-phospho-D-ribosyl)imidazole-4-carboxylate: step 1/2. In Haemophilus influenzae (strain PittEE), this protein is Phosphoribosylaminoimidazole-succinocarboxamide synthase.